A 147-amino-acid chain; its full sequence is Large ribosomal subunit protein uL13 (147 aa).

This sequence belongs to the universal ribosomal protein uL13 family. In terms of assembly, part of the 50S ribosomal subunit.

Functionally, this protein is one of the early assembly proteins of the 50S ribosomal subunit, although it is not seen to bind rRNA by itself. It is important during the early stages of 50S assembly. The protein is Large ribosomal subunit protein uL13 of Mycolicibacterium gilvum (strain PYR-GCK) (Mycobacterium gilvum (strain PYR-GCK)).